The primary structure comprises 85 residues: Large ribosomal subunit protein bL27 (85 aa).

Residues 1–20 (MAHKKGGGTTRNGRDSESKR) are disordered.

This sequence belongs to the bacterial ribosomal protein bL27 family.

The protein is Large ribosomal subunit protein bL27 of Herminiimonas arsenicoxydans.